A 497-amino-acid polypeptide reads, in one-letter code: Vacuolar-processing enzyme (497 aa).

Positions 1-31 (METHKSLLFFTNYVLFLVFTLSFLPIPGLLA) are cleaved as a signal peptide. The active site involves histidine 180. Cysteine 222 serves as the catalytic Nucleophile. Cysteines 255 and 269 form a disulfide. N-linked (GlcNAc...) asparagine glycans are attached at residues asparagine 320 and asparagine 374. 2 disulfides stabilise this stretch: cysteine 433/cysteine 463 and cysteine 445/cysteine 480.

The protein belongs to the peptidase C13 family.

Its function is as follows. Asparagine-specific endopeptidase involved in the processing of vacuolar seed protein precursors into the mature forms. The sequence is that of Vacuolar-processing enzyme from Ricinus communis (Castor bean).